We begin with the raw amino-acid sequence, 351 residues long: MAEASTCNMEVSCTQPESSVKPNAEDMTSKDYYFDSYAHFGIHEEMLKDEVRTLTYRNSMFHNRHLFKDKVVLDVGSGTGILCMFAAKAGAKKVIGIECSSISDYAIKIVKANKLDHVVTIIKGKVEEVELPVEKVDIIISEWMGYCLFYESMLNTVIYARDKWLTPDGLIFPDRATLYVTAIEDRQYKDYKIHWWENVYGFDMSCIKDVAIKEPLVDVVDPKQLVTNACLIKEVDIYTVKVDDLTFTSPFCLQVKRNDYIHALVAYFNIEFTRCHKRTGFSTSPESPYTHWKQTVFYMEDYLTVKTGEEIFGTISMKPNAKNNRDLDFTVDIDFKGQLCELSCSTDYRMR.

The SAM-dependent MTase PRMT-type domain occupies 30–331; sequence KDYYFDSYAH…KNNRDLDFTV (302 aa). Positions 43, 52, 76, 98, and 127 each coordinate S-adenosyl-L-methionine. Active-site residues include E142 and E151.

This sequence belongs to the class I-like SAM-binding methyltransferase superfamily. Protein arginine N-methyltransferase family. As to quaternary structure, homodimer. Homooctamer; individual homodimers associates to form a homooctamer and homooligomerization is required for proper localization to the cell membrane. Individual homodimers can associate to form a homohexamer. Component of a complex with lsm14a/rap55a. Interacts with cirbp.

The protein resides in the nucleus. It is found in the nucleoplasm. Its subcellular location is the cytoplasm. The protein localises to the cytosol. The enzyme catalyses L-arginyl-[protein] + 2 S-adenosyl-L-methionine = N(omega),N(omega)-dimethyl-L-arginyl-[protein] + 2 S-adenosyl-L-homocysteine + 2 H(+). It catalyses the reaction L-arginyl-[protein] + S-adenosyl-L-methionine = N(omega)-methyl-L-arginyl-[protein] + S-adenosyl-L-homocysteine + H(+). The catalysed reaction is N(omega)-methyl-L-arginyl-[protein] + S-adenosyl-L-methionine = N(omega),N(omega)-dimethyl-L-arginyl-[protein] + S-adenosyl-L-homocysteine + H(+). Functionally, arginine methyltransferase that methylates (mono and asymmetric dimethylation) the guanidino nitrogens of arginyl residues present in target proteins. Constitutes the main enzyme that mediates monomethylation and asymmetric dimethylation of histone H4 'Arg-3' (H4R3me1 and H4R3me2a, respectively), a specific tag for epigenetic transcriptional activation. Methylates ilf3 to regulate its DNA-binding activity. Required for neural induction, playing a key role in the control of epidermal versus neural cell fate choice. Methylates cirbp to regulate its subcellular location. Acts transiently during metamorphosis as a transcription coactivator, enhancing thyroid hormone (T3) receptor (TR)-mediated transcription by enhancing TR binding to the T3 response element (TRE), and histone modification through recruitment of other coactivators. This chain is Protein arginine N-methyltransferase 1, found in Xenopus tropicalis (Western clawed frog).